The sequence spans 539 residues: uncharacterized protein (539 aa).

2 ABC transporter domains span residues 9–276 (LEVK…EFKK) and 288–536 (IKLE…QEMF). Residues 41–48 (GKSGAGKS) and 325–332 (GTSGAGKT) contribute to the ATP site.

It belongs to the ABC transporter superfamily.

This is an uncharacterized protein from Methanocaldococcus jannaschii (strain ATCC 43067 / DSM 2661 / JAL-1 / JCM 10045 / NBRC 100440) (Methanococcus jannaschii).